The following is a 310-amino-acid chain: Vomeronasal type-1 receptor 101 (310 aa).

The Extracellular portion of the chain corresponds to M1–S19. Residues E20 to F40 traverse the membrane as a helical segment. At E41–D49 the chain is on the cytoplasmic side. The helical transmembrane segment at L50–A70 threads the bilayer. The Extracellular portion of the chain corresponds to A71–R93. A disulfide bridge connects residues C85 and C172. Residues L94–L114 traverse the membrane as a helical segment. At S115 to G134 the chain is on the cytoplasmic side. A helical membrane pass occupies residues A135 to I155. Over A156–E193 the chain is Extracellular. N159 is a glycosylation site (N-linked (GlcNAc...) asparagine). Residues V194–H214 traverse the membrane as a helical segment. Residues K215–R238 are Cytoplasmic-facing. A helical transmembrane segment spans residues T239 to H259. The Extracellular portion of the chain corresponds to S260 to S268. A helical membrane pass occupies residues I269–F289. Over V290–T310 the chain is Cytoplasmic.

The protein belongs to the G-protein coupled receptor 1 family. As to expression, expressed in 1-4% of neurons of the vomeronasal organ. Only one pheromone receptor gene may be expressed in a particular neuron. Not expressed in the main olfactory epithelium.

Its subcellular location is the cell membrane. Its function is as follows. Putative pheromone receptor implicated in the regulation of social as well as reproductive behavior. This Rattus norvegicus (Rat) protein is Vomeronasal type-1 receptor 101 (Vom1r101).